The primary structure comprises 531 residues: 2-isopropylmalate synthase (531 aa).

The Pyruvate carboxyltransferase domain occupies 8-284; it reads IIIFDTTLRD…LTNIDTKQIY (277 aa). Residues Asp17, His208, His210, and Asn244 each coordinate Mn(2+). A regulatory domain region spans residues 408 to 531; that stretch reads RVELVQVSCG…TQDKQTEVTA (124 aa).

It belongs to the alpha-IPM synthase/homocitrate synthase family. LeuA type 1 subfamily. In terms of assembly, homodimer. Requires Mn(2+) as cofactor.

It localises to the cytoplasm. The catalysed reaction is 3-methyl-2-oxobutanoate + acetyl-CoA + H2O = (2S)-2-isopropylmalate + CoA + H(+). It participates in amino-acid biosynthesis; L-leucine biosynthesis; L-leucine from 3-methyl-2-oxobutanoate: step 1/4. In terms of biological role, catalyzes the condensation of the acetyl group of acetyl-CoA with 3-methyl-2-oxobutanoate (2-ketoisovalerate) to form 3-carboxy-3-hydroxy-4-methylpentanoate (2-isopropylmalate). In Nostoc sp. (strain PCC 7120 / SAG 25.82 / UTEX 2576), this protein is 2-isopropylmalate synthase.